A 572-amino-acid polypeptide reads, in one-letter code: Methionine--tRNA ligase (572 aa).

Positions 11-21 (PYINGIKHLGN) match the 'HIGH' region motif. Zn(2+) is bound by residues cysteine 143, cysteine 146, cysteine 156, and cysteine 159. Positions 346–350 (QFSTS) match the 'KMSKS' region motif. Residue threonine 349 participates in ATP binding.

This sequence belongs to the class-I aminoacyl-tRNA synthetase family. MetG type 1 subfamily. As to quaternary structure, monomer. Requires Zn(2+) as cofactor.

Its subcellular location is the cytoplasm. The enzyme catalyses tRNA(Met) + L-methionine + ATP = L-methionyl-tRNA(Met) + AMP + diphosphate. Its function is as follows. Is required not only for elongation of protein synthesis but also for the initiation of all mRNA translation through initiator tRNA(fMet) aminoacylation. This Cereibacter sphaeroides (strain ATCC 17029 / ATH 2.4.9) (Rhodobacter sphaeroides) protein is Methionine--tRNA ligase.